Reading from the N-terminus, the 656-residue chain is Very long-chain specific acyl-CoA dehydrogenase, mitochondrial (656 aa).

The segment at 1–33 (MQSARMTPSVGRQLLRLGARSSRSTTVLQGQPR) is disordered. The transit peptide at 1–41 (MQSARMTPSVGRQLLRLGARSSRSTTVLQGQPRPISAQRLY) directs the protein to the mitochondrion. The segment at 42-483 (AREATQAVLD…ALQGCMDKGK (442 aa)) is catalytic. N6-acetyllysine is present on lysine 52. N6-acetyllysine; alternate occurs at positions 72 and 128. An N6-succinyllysine; alternate mark is found at lysine 72 and lysine 128. Lysine 196 carries the N6-succinyllysine modification. Residue 215–224 (FCLTEPSSGS) participates in FAD binding. Cysteine 238 carries the post-translational modification S-nitrosocysteine. Lysine 240 is modified (N6-acetyllysine; alternate). Lysine 240 is subject to N6-succinyllysine; alternate. 250 to 252 (WIS) contributes to the FAD binding site. Lysine 269 carries the N6-succinyllysine modification. Lysine 277 and lysine 279 each carry N6-acetyllysine; alternate. N6-succinyllysine; alternate occurs at positions 277 and 279. N6-acetyllysine occurs at positions 299 and 317. Position 332 is an N6-acetyllysine; alternate (lysine 332). Lysine 332 is modified (N6-succinyllysine; alternate). At lysine 373 the chain carries N6-succinyllysine. 462 to 464 (FEG) serves as a coordination point for substrate. Glutamate 463 serves as the catalytic Proton acceptor. An FAD-binding site is contributed by 465–467 (AND). N6-acetyllysine; alternate is present on lysine 483. Position 483 is an N6-succinyllysine; alternate (lysine 483). The interval 484 to 517 (ELTGLGNALKNPFGNVGLLMGEAGKQLRRRTGIG) is membrane-anchoring. 2 positions are modified to phosphoserine: serine 518 and serine 523. An N6-acetyllysine modification is found at lysine 551. Lysine 557 bears the N6-acetyllysine; alternate mark. The residue at position 557 (lysine 557) is an N6-succinyllysine; alternate. Glutamine 563 provides a ligand contact to FAD. Lysine 640 bears the N6-succinyllysine mark.

The protein belongs to the acyl-CoA dehydrogenase family. Homodimer. Homodimerizes after import into the mitochondrion. Requires FAD as cofactor. Post-translationally, S-nitrosylation at Cys-238 in liver improves catalytic efficiency.

It localises to the mitochondrion inner membrane. The enzyme catalyses a very-long-chain 2,3-saturated fatty acyl-CoA + oxidized [electron-transfer flavoprotein] + H(+) = a very-long-chain (2E)-enoyl-CoA + reduced [electron-transfer flavoprotein]. It catalyses the reaction dodecanoyl-CoA + oxidized [electron-transfer flavoprotein] + H(+) = (2E)-dodecenoyl-CoA + reduced [electron-transfer flavoprotein]. The catalysed reaction is tetradecanoyl-CoA + oxidized [electron-transfer flavoprotein] + H(+) = (2E)-tetradecenoyl-CoA + reduced [electron-transfer flavoprotein]. It carries out the reaction oxidized [electron-transfer flavoprotein] + hexadecanoyl-CoA + H(+) = (2E)-hexadecenoyl-CoA + reduced [electron-transfer flavoprotein]. The enzyme catalyses octadecanoyl-CoA + oxidized [electron-transfer flavoprotein] + H(+) = (2E)-octadecenoyl-CoA + reduced [electron-transfer flavoprotein]. It catalyses the reaction eicosanoyl-CoA + oxidized [electron-transfer flavoprotein] + H(+) = (2E)-eicosenoyl-CoA + reduced [electron-transfer flavoprotein]. The catalysed reaction is docosanoyl-CoA + oxidized [electron-transfer flavoprotein] + H(+) = (2E)-docosenoyl-CoA + reduced [electron-transfer flavoprotein]. It carries out the reaction tetracosanoyl-CoA + oxidized [electron-transfer flavoprotein] + H(+) = (2E)-tetracosenoyl-CoA + reduced [electron-transfer flavoprotein]. Its pathway is lipid metabolism; mitochondrial fatty acid beta-oxidation. Its function is as follows. Very long-chain specific acyl-CoA dehydrogenase is one of the acyl-CoA dehydrogenases that catalyze the first step of mitochondrial fatty acid beta-oxidation, an aerobic process breaking down fatty acids into acetyl-CoA and allowing the production of energy from fats. The first step of fatty acid beta-oxidation consists in the removal of one hydrogen from C-2 and C-3 of the straight-chain fatty acyl-CoA thioester, resulting in the formation of trans-2-enoyl-CoA. Among the different mitochondrial acyl-CoA dehydrogenases, very long-chain specific acyl-CoA dehydrogenase acts specifically on acyl-CoAs with saturated 12 to 24 carbons long primary chains. This chain is Very long-chain specific acyl-CoA dehydrogenase, mitochondrial, found in Mus musculus (Mouse).